A 302-amino-acid chain; its full sequence is 33 kDa chaperonin (302 aa).

2 disulfide bridges follow: cysteine 234/cysteine 236 and cysteine 267/cysteine 270.

This sequence belongs to the HSP33 family. Under oxidizing conditions two disulfide bonds are formed involving the reactive cysteines. Under reducing conditions zinc is bound to the reactive cysteines and the protein is inactive.

The protein localises to the cytoplasm. Functionally, redox regulated molecular chaperone. Protects both thermally unfolding and oxidatively damaged proteins from irreversible aggregation. Plays an important role in the bacterial defense system toward oxidative stress. This chain is 33 kDa chaperonin, found in Neisseria gonorrhoeae (strain ATCC 700825 / FA 1090).